Consider the following 306-residue polypeptide: Pantothenate kinase (306 aa).

91–98 contacts ATP; that stretch reads GSVAVGKS.

Belongs to the prokaryotic pantothenate kinase family.

Its subcellular location is the cytoplasm. It catalyses the reaction (R)-pantothenate + ATP = (R)-4'-phosphopantothenate + ADP + H(+). Its pathway is cofactor biosynthesis; coenzyme A biosynthesis; CoA from (R)-pantothenate: step 1/5. The chain is Pantothenate kinase from Streptococcus gordonii (strain Challis / ATCC 35105 / BCRC 15272 / CH1 / DL1 / V288).